Here is a 121-residue protein sequence, read N- to C-terminus: Small ribosomal subunit protein uS13 (121 aa).

Positions 96 to 121 (PVRGQNTKNNARTRKGKAVAIAGKKK) are disordered. The span at 106–121 (ARTRKGKAVAIAGKKK) shows a compositional bias: basic residues.

It belongs to the universal ribosomal protein uS13 family. Part of the 30S ribosomal subunit. Forms a loose heterodimer with protein S19. Forms two bridges to the 50S subunit in the 70S ribosome.

In terms of biological role, located at the top of the head of the 30S subunit, it contacts several helices of the 16S rRNA. In the 70S ribosome it contacts the 23S rRNA (bridge B1a) and protein L5 of the 50S subunit (bridge B1b), connecting the 2 subunits; these bridges are implicated in subunit movement. Contacts the tRNAs in the A and P-sites. The chain is Small ribosomal subunit protein uS13 from Streptococcus suis (strain 05ZYH33).